A 712-amino-acid polypeptide reads, in one-letter code: Nucleolin (712 aa).

The tract at residues 1-305 is disordered; it reads MVKLAKAGKN…KKQKVEGTEP (305 aa). N6-acetyllysine occurs at positions 9, 15, and 16. Over residues 24–43 the composition is skewed to acidic residues; sequence VEEDSEDEEMSEDEEDDSSG. A phosphoserine mark is found at Ser28, Ser34, Ser41, and Ser42. Low complexity predominate over residues 56-107; sequence AAATSAKKVVVSPTKKVAVATPAKKAAVTPGKKAAATPAKKTVTPAKAVTTP. The stretch at 58 to 65 is repeat 1; it reads ATSAKKVV. The tract at residues 58 to 135 is 8 X 8 AA tandem repeats of X-T-P-X-K-K-X-X; sequence ATSAKKVVVS…GAAIPAKGAK (78 aa). Position 67 is a phosphoserine (Ser67). Phosphothreonine is present on residues Thr69, Thr76, Thr84, and Thr92. Repeat copies occupy residues 75–82, 83–90, and 91–98. Lys96 is modified (N6-acetyllysine). Thr99 carries the phosphothreonine modification. Residues 99–104 form a 5; truncated repeat; it reads TPAKAV. Lys102 carries the N6-acetyllysine modification. Repeat unit 6 spans residues 105–112; the sequence is TTPGKKGA. A Phosphothreonine modification is found at Thr106. Lys109 carries the post-translational modification N6-acetyllysine. Phosphothreonine is present on Thr113. An N6-acetyllysine modification is found at Lys116. Tandem repeats lie at residues 120 to 127 and 128 to 135. Residue Thr121 is modified to Phosphothreonine. Low complexity predominate over residues 122–137; it reads PGKKGAAIPAKGAKNG. An N6-acetyllysine modification is found at Lys124. Phosphoserine occurs at positions 145 and 153. Acidic residues predominate over residues 145-171; that stretch reads SDEEEEDDSEEDEDDDEDEDEDEDEIE. The span at 172 to 183 shows a compositional bias: low complexity; it reads PAAMKAAAAAPA. Residues Ser184 and Ser206 each carry the phosphoserine modification. The span at 184–211 shows a compositional bias: acidic residues; the sequence is SEDEDDEDDEDDEDEDDDEEDDSEEEAM. A Phosphothreonine modification is found at Thr214. Residues 234–274 are compositionally biased toward acidic residues; the sequence is EDEDEEEDDEDEDDDDDDDDDDEDDEDEDDEEEEEEEEEEP. The segment covering 275-302 has biased composition (basic and acidic residues); that stretch reads VKEAPGKRKKEMAKQKAAPEAKKQKVEG. A Glycyl lysine isopeptide (Lys-Gly) (interchain with G-Cter in SUMO1); alternate cross-link involves residue Lys299. Residue Lys299 forms a Glycyl lysine isopeptide (Lys-Gly) (interchain with G-Cter in SUMO2); alternate linkage. Position 303 is a phosphothreonine (Thr303). RRM domains are found at residues 309-385 and 395-468; these read FNLF…KPKG and RTLL…YTGE. Residue Lys320 is modified to N6-acetyllysine. Residue Lys326 forms a Glycyl lysine isopeptide (Lys-Gly) (interchain with G-Cter in SUMO1); alternate linkage. Residue Lys326 forms a Glycyl lysine isopeptide (Lys-Gly) (interchain with G-Cter in SUMO2); alternate linkage. Lys350 carries the post-translational modification N6-acetyllysine. Ser358 bears the Phosphoserine mark. Position 369 is a phosphothreonine (Thr369). Lys372 participates in a covalent cross-link: Glycyl lysine isopeptide (Lys-Gly) (interchain with G-Cter in SUMO2). Residue Lys379 forms a Glycyl lysine isopeptide (Lys-Gly) (interchain with G-Cter in SUMO2); alternate linkage. N6-acetyllysine; alternate is present on Lys379. Residues Lys400 and Lys405 each carry the N6-acetyllysine modification. Thr407 is subject to Phosphothreonine. An N6-acetyllysine mark is found at Lys429 and Lys446. Phosphoserine is present on residues Ser460 and Ser462. An N6-acetyllysine mark is found at Lys469 and Lys479. Residues 488-562 enclose the RRM 3 domain; the sequence is KTLVLSNLSY…RAIRLELQGP (75 aa). A Glycyl lysine isopeptide (Lys-Gly) (interchain with G-Cter in SUMO2); alternate cross-link involves residue Lys515. The residue at position 515 (Lys515) is an N6-acetyllysine; alternate. Lys523 bears the N6-acetyllysine mark. Ser565 carries the post-translational modification Phosphoserine. N6-acetyllysine is present on Lys574. In terms of domain architecture, RRM 4 spans 574–649; the sequence is KTLFVKGLSE…NKVTLDWAKP (76 aa). A Glycyl lysine isopeptide (Lys-Gly) (interchain with G-Cter in SUMO2); alternate cross-link involves residue Lys579. An N6-acetyllysine; alternate modification is found at Lys579. Ser582 bears the Phosphoserine mark. Residue Lys591 forms a Glycyl lysine isopeptide (Lys-Gly) (interchain with G-Cter in SUMO1); alternate linkage. Lys591 is covalently cross-linked (Glycyl lysine isopeptide (Lys-Gly) (interchain with G-Cter in SUMO2); alternate). Phosphoserine occurs at positions 593 and 621. Residue Lys626 forms a Glycyl lysine isopeptide (Lys-Gly) (interchain with G-Cter in SUMO2) linkage. The disordered stretch occupies residues 642–712; sequence VTLDWAKPKG…KPQGKKTKFE (71 aa). Residue Lys648 is modified to N6-acetyllysine. The segment covering 652-698 has biased composition (gly residues); it reads EGGFGGRGGGRGGFGGRGGGRGGRGGFGGRGRGGFGGRGGFRGGRGG. An asymmetric dimethylarginine mark is found at Arg658, Arg662, Arg668, Arg672, Arg675, Arg681, Arg683, Arg689, and Arg693. The residue at position 696 (Arg696) is an Asymmetric dimethylarginine; alternate. Arg696 carries the post-translational modification Omega-N-methylarginine; alternate. The span at 699-712 shows a compositional bias: basic and acidic residues; sequence GGDHKPQGKKTKFE.

In terms of assembly, identified in a IGF2BP1-dependent mRNP granule complex containing untranslated mRNAs. Component of the SWAP complex that consists of NPM1, NCL/nucleolin, PARP1 and SWAP70. Component of a complex which is at least composed of HTATSF1/Tat-SF1, the P-TEFb complex components CDK9 and CCNT1, RNA polymerase II, SUPT5H, and NCL/nucleolin. Interacts with AICDA. Interacts with APTX. Interacts with C1QBP. Interacts with ERBB4. Interacts (via C-terminus) with FMR1 isoform 6 (via N-terminus). Interacts with GZF1; this interaction is important for nucleolar localization of GZF1. Interacts with NSUN2. Interacts with NVL. Interacts (via N-terminus domain) with SETX. Interacts (via RRM1 and C-terminal RRM4/Arg/Gly-rich domains) with TERT; the interaction is important for nucleolar localization of TERT. Interacts with WDR46. Interacts with ZFP36. Interacts with LRRC34. Interacts with RRP1B. Interacts with HNRNPU; this interaction occurs during mitosis. Interacts with RIOK1; RIOK1 recruits NCL to the PRMT5 for symmetrically methylation. Interacts with ZBTB7B. Interacts with MDK; this interaction promotes NCL clustering and lateral movements of this complex into lipid rafts leading to MDK internalization. Interacts with HDGF. Interacts with ALKBH2. Interacts with IGFBP5; this interaction is necessary for IGFBP5 localization to the nucleus. Interacts with DDX24 (when ubiquitinated); this interaction may be important during ribosome biogenesis. Post-translationally, some glutamate residues are glycylated by TTLL8. This modification occurs exclusively on glutamate residues and results in a glycine chain on the gamma-carboxyl group. In terms of processing, symmetrically methylated by PRMT5.

It is found in the nucleus. Its subcellular location is the nucleolus. The protein localises to the cytoplasm. Its function is as follows. Nucleolin is the major nucleolar protein of growing eukaryotic cells. It is found associated with intranucleolar chromatin and pre-ribosomal particles. It induces chromatin decondensation by binding to histone H1. It is thought to play a role in pre-rRNA transcription and ribosome assembly. May play a role in the process of transcriptional elongation. Binds RNA oligonucleotides with 5'-UUAGGG-3' repeats more tightly than the telomeric single-stranded DNA 5'-TTAGGG-3' repeats. This chain is Nucleolin (NCL), found in Pongo abelii (Sumatran orangutan).